The chain runs to 440 residues: D-serine dehydratase (440 aa).

Lysine 116 is subject to N6-(pyridoxal phosphate)lysine.

This sequence belongs to the serine/threonine dehydratase family. DsdA subfamily. Monomer. The cofactor is pyridoxal 5'-phosphate.

It catalyses the reaction D-serine = pyruvate + NH4(+). In Salmonella schwarzengrund (strain CVM19633), this protein is D-serine dehydratase.